We begin with the raw amino-acid sequence, 322 residues long: Malate dehydrogenase 1 (322 aa).

NAD(+) is bound by residues 10-15 (GSGQIG) and aspartate 34. 2 residues coordinate substrate: arginine 83 and arginine 89. NAD(+) is bound by residues asparagine 96 and 119–121 (ITN). Asparagine 121 and arginine 152 together coordinate substrate. Histidine 176 functions as the Proton acceptor in the catalytic mechanism.

This sequence belongs to the LDH/MDH superfamily. MDH type 3 family.

The enzyme catalyses (S)-malate + NAD(+) = oxaloacetate + NADH + H(+). Its function is as follows. Catalyzes the reversible oxidation of malate to oxaloacetate. The sequence is that of Malate dehydrogenase 1 from Rhodopseudomonas palustris (strain BisB18).